The sequence spans 449 residues: Neuraminidase (449 aa).

The Intravirion segment spans residues 1 to 6 (MNPNQK). A helical membrane pass occupies residues 7 to 27 (IITIGSICMVIGIVSLMLQIG). An involved in apical transport and lipid raft association region spans residues 11-33 (GSICMVIGIVSLMLQIGNIISIW). Over 28-449 (NIISIWVSHS…GAELPFTIDK (422 aa)) the chain is Virion surface. Residues 36-70 (HSIQTGNQHQAEPISNTNFLTEKAVASVTLAGNSS) form a hypervariable stalk region region. N-linked (GlcNAc...) asparagine; by host glycosylation is present at Asn-68. Positions 71 to 449 (LCPISGWAVH…GAELPFTIDK (379 aa)) are head of neuraminidase. 8 disulfide bridges follow: Cys-72-Cys-397, Cys-104-Cys-109, Cys-164-Cys-211, Cys-213-Cys-218, Cys-259-Cys-272, Cys-261-Cys-270, Cys-298-Cys-315, and Cys-401-Cys-426. Arg-98 serves as a coordination point for substrate. Asn-126 carries an N-linked (GlcNAc...) asparagine; by host glycan. The active-site Proton donor/acceptor is the Asp-131. Residue Arg-132 participates in substrate binding. N-linked (GlcNAc...) asparagine; by host glycosylation occurs at Asn-215. 257-258 (EE) provides a ligand contact to substrate. A substrate-binding site is contributed by Arg-273. Residues Asp-274, Gly-278, and Asp-304 each coordinate Ca(2+). Substrate is bound at residue Arg-348. The active-site Nucleophile is the Tyr-382.

The protein belongs to the glycosyl hydrolase 34 family. As to quaternary structure, homotetramer. Ca(2+) serves as cofactor. Post-translationally, N-glycosylated.

The protein localises to the virion membrane. The protein resides in the host apical cell membrane. It catalyses the reaction Hydrolysis of alpha-(2-&gt;3)-, alpha-(2-&gt;6)-, alpha-(2-&gt;8)- glycosidic linkages of terminal sialic acid residues in oligosaccharides, glycoproteins, glycolipids, colominic acid and synthetic substrates.. Its activity is regulated as follows. Inhibited by the neuraminidase inhibitors zanamivir (Relenza) and oseltamivir (Tamiflu). These drugs interfere with the release of progeny virus from infected cells and are effective against all influenza strains. Resistance to neuraminidase inhibitors is quite rare. Catalyzes the removal of terminal sialic acid residues from viral and cellular glycoconjugates. Cleaves off the terminal sialic acids on the glycosylated HA during virus budding to facilitate virus release. Additionally helps virus spread through the circulation by further removing sialic acids from the cell surface. These cleavages prevent self-aggregation and ensure the efficient spread of the progeny virus from cell to cell. Otherwise, infection would be limited to one round of replication. Described as a receptor-destroying enzyme because it cleaves a terminal sialic acid from the cellular receptors. May facilitate viral invasion of the upper airways by cleaving the sialic acid moieties on the mucin of the airway epithelial cells. Likely to plays a role in the budding process through its association with lipid rafts during intracellular transport. May additionally display a raft-association independent effect on budding. Plays a role in the determination of host range restriction on replication and virulence. Sialidase activity in late endosome/lysosome traffic seems to enhance virus replication. The polypeptide is Neuraminidase (Aves (Cat)).